The chain runs to 62 residues: Large ribosomal subunit protein uL30 (62 aa).

The protein belongs to the universal ribosomal protein uL30 family. In terms of assembly, part of the 50S ribosomal subunit.

The sequence is that of Large ribosomal subunit protein uL30 from Shewanella frigidimarina (strain NCIMB 400).